The chain runs to 98 residues: MAKSKFRPLHDRVVVRRVESESKTAGGIIIPDTAKEKPQEGEIIAVGSGARDEAGKLVPLDVKAGDRILFGKWSGTEVKLNGEDLLIMKESDIMGIIG.

The protein belongs to the GroES chaperonin family. In terms of assembly, heptamer of 7 subunits arranged in a ring. Interacts with the chaperonin GroEL.

It is found in the cytoplasm. Its function is as follows. Together with the chaperonin GroEL, plays an essential role in assisting protein folding. The GroEL-GroES system forms a nano-cage that allows encapsulation of the non-native substrate proteins and provides a physical environment optimized to promote and accelerate protein folding. GroES binds to the apical surface of the GroEL ring, thereby capping the opening of the GroEL channel. The polypeptide is Co-chaperonin GroES 5 (Mesorhizobium japonicum (strain LMG 29417 / CECT 9101 / MAFF 303099) (Mesorhizobium loti (strain MAFF 303099))).